A 135-amino-acid polypeptide reads, in one-letter code: NAD(P)H-quinone oxidoreductase subunit 3 (135 aa).

The next 3 membrane-spanning stretches (helical) occupy residues Ile-15–Val-35, Met-79–Val-99, and Leu-104–Val-124.

This sequence belongs to the complex I subunit 3 family. As to quaternary structure, NDH-1 can be composed of about 15 different subunits; different subcomplexes with different compositions have been identified which probably have different functions.

It is found in the cellular thylakoid membrane. It catalyses the reaction a plastoquinone + NADH + (n+1) H(+)(in) = a plastoquinol + NAD(+) + n H(+)(out). The enzyme catalyses a plastoquinone + NADPH + (n+1) H(+)(in) = a plastoquinol + NADP(+) + n H(+)(out). Its function is as follows. NDH-1 shuttles electrons from an unknown electron donor, via FMN and iron-sulfur (Fe-S) centers, to quinones in the respiratory and/or the photosynthetic chain. The immediate electron acceptor for the enzyme in this species is believed to be plastoquinone. Couples the redox reaction to proton translocation, and thus conserves the redox energy in a proton gradient. Cyanobacterial NDH-1 also plays a role in inorganic carbon-concentration. This Trichodesmium erythraeum (strain IMS101) protein is NAD(P)H-quinone oxidoreductase subunit 3.